The chain runs to 557 residues: Fanconi anemia group C protein homolog (557 aa).

Belongs to the multisubunit FA complex composed of FANCA, FANCB, FANCC, FANCE, FANCF, FANCG, FANCL/PHF9 and FANCM. This complex may also include HSP70. Interacts with ZBTB32. Upon IFNG induction, interacts with STAT1. Interacts with CDK1. Interacts with EIF2AK2.

It localises to the nucleus. The protein resides in the cytoplasm. DNA repair protein that may operate in a postreplication repair or a cell cycle checkpoint function. May be implicated in interstrand DNA cross-link repair and in the maintenance of normal chromosome stability. Upon IFNG induction, may facilitate STAT1 activation by recruiting STAT1 to IFNGR1. The sequence is that of Fanconi anemia group C protein homolog (Fancc) from Rattus norvegicus (Rat).